Here is a 2841-residue protein sequence, read N- to C-terminus: MAAHRPVEWVQAVVSRFDEQLPIKTGQQNTHTKVSTEHNKECLINISKYKFSLVISGLTTILKNVNNMRIFGEAAEKNLYLSQLIILDTLEKCLAGQPKDTMRLDETMLVKQLLPEICHFLHTCREGNQHAAELRNSASGVLFSLSCNNFNAVFSRISTRLQELTVCSEDNVDVHDIELLQYINVDCAKLKRLLKETAFKFKALKKVAQLAVINSLEKAFWNWVENYPDEFTKLYQIPQTDMAECAEKLFDLVDGFAESTKRKAAVWPLQIILLILCPEIIQDISKDVVDESNINKKLFLDSLRKALAGHGGSRQLTESAAIACVKLCKASTYINWEDNSVIFLLVQSMVVDLKNLLFNPSKPFSRGSQPADVDLMIDCLVSCFRISPHNNQHFKICLAQNSPSTFHYVLVNSLHRIITNSALDWWPKIDAVYCHSVELRNMFGETLHKAVQGCGAHPAIRMAPSLTFKEKVTSLKFKEKPTDLETRSYKCLLLSMVKLIHADPKLLLCNPRKQGPETQSSTAELITGLVQLVPQSHMPEVAQEAMEALLVLHQLDSIDLWNPDAPVETFWEISSQMLFYICKKLTSHQMLSSTEILKWLREILICRNKFLLKNKQADRSSCHSLYLYGVGCEMSATGNTTQMSVDHDEFLRACTPGASLRKGRGNSSMDSTAGCSGTPPICRQAQTKLEVALYMFLWNPDTEAVLVAMSCFRHLCEEADIRCGVDEVSVHNFLPNYNTFMEFASVSNMMSTGRAALQKRVMALLRRIEHPTAGNIEAWEDTHAKWEQATKLILNYPKAKMEDGQAAESLHKTIVKRRMSHVSGGGSIDLSDTDSLQEWINMTGFLCALGGVCLQQRSSSGLATYSPPMGAVSERKGSMISVMSSEGNIDSPVSRFMDRLLSLMVCNHEKVGLQIRTNVKDLVGLELSPALYPMLFNKLKNTISKFFDSQGQVLLSDSNTQFVEQTIAIMKNLLDNHTEGSSEHLGQASIETMMLNLVRYVRVLGNMVHAIQIKTKLCQLVEVMMARRDDLSFCQEMKFRNKMVEYLTDWVMGTSNQAADDDIKCLTRDLDQASMEAVVSLLAGLPLQPEEGDGVELMEAKSQLFLKYFTLFMNLLNDCSEVEDENAQTGGRKRGMSRRLASLRHCTVLAMSNLLNANVDSGLMHSIGLGYHKDLQTRATFMEVLTKILQQGTEFDTLAETVLADRFERLVELVTMMGDQGELPIAMALANVVPCSQWDELARVLVTLFDSRHLLYQLLWNMFSKEVELADSMQTLFRGNSLASKIMTFCFKVYGATYLQKLLDPLLRVIITSSDWQHVSFEVDPTRLEPSESLEENQRNLLQMTEKFFHAIISSSSEFPSQLRSVCHCLYQATCHSLLNKATVKERKENKKSVVSQRFPQNSIGAVGSAMFLRFINPAIVSPYEAGILDKKPPPRIERGLKLMSKVLQSIANHVLFTKEEHMRPFNDFVKSNFDLARRFFLDIASDCPTSDAVNHSLSFISDGNVLALHRLLWNNQEKIGQYLSSNRDHKAVGRRPFDKMATLLAYLGPPEHKPVADTHWSSLNLTSSKFEEFMTRHQVHEKEEFKALKTLSIFYQAGTSKAGNPIFYYVARRFKTGQINGDLLIYHVLLTLKPYYAKPYEIVVDLTHTGPSNRFKTDFLSKWFVVFPGFAYDNVSAVYIYNCNSWVREYTKYHERLLTGLKGSKRLIFIDCPGKLAEHIEHEQQKLPAATLALEEDLKVFHNALKLAHKDTKVSIKVGSTAVQVTSAERTKVLGQSVFLNDIYYASEIEEICLVDENQFTLTIANQGTPLTFMHQECEAIVQSIIHIRTRWELSQPDSIPQHTKIRPKDVPGTLLNIALLNLGSSDPSLRSAAYNLLCALTCTFNLKIEGQLLETSGLCIPANNTLFIVSISKTLAANEPHLTLEFLEECISGFSKSSIELKHLCLEYMTPWLSNLVRFCKHNDDAKRQRVTAILDKLITMTINEKQMYPSIQAKIWGSLGQITDLLDVVLDSFIKTSATGGLGSIKAEVMADTAVALASGNVKLVSSKVIGRMCKIIDKTCLSPTPTLEQHLMWDDIAILARYMLMLSFNNSLDVAAHLPYLFHVVTFLVATGPLSLRASTHGLLINIIHSLCTCSQLHFSEETKQVLRLSLTEFSLPKFYLLFGISKVKSAAVIAFRSSYRDRSFSPGSYERETFALTSLETVTEALLEIMEACMRDIPTCKWLDQWTELAQRFAFQYNPSLQPRALVVFGCISKRVSHGQIKQIIRILSKALESCLKGPDTYNSQVLIESTVIALTKLQPLLNKDSPLHKALFWVAVAVLQLDEVNLYSAGTALLEQNLHTLDSLRIFNDKSPEEVFMAIRNPLEWHCKQMDHFVGLNFNSNFNFALVGHLLKGYRHPSPAIVARTVRILHTLLTLVNKHRNCDKFEVNTQSVAYLAALLTVSEEVRSRCSLKHRKSLLLTDISMENVPMDTYPIHHGDPSYRTLKETQPWSSPKGSEGYLAATYPAVGQTSPRARKSMSLDMGQPSQANTKKLLGTRKSFDHLISDTKAPKRQEMESGITTPPKMRRVAETDYEMETQRIPSSQQHPHLRKVSVSESNVLLDEEVLTDPKIQALLLTVLATLVKYTTDEFDQRILYEYLAEASVVFPKVFPVVHNLLDSKINTLLSLCQDPNLLNPIHGIVQSVVYHEESPPQYQTSYLQSFGFNGLWRFAGPFSKQTQIPDYAELIVKFLDALIDTYLPGIDEETSEESLLTPTSPYPPALQSQLSITANLNLSNSMTSLATSQHSPGLDKENVELSPTAGHCNSGRTRHGSASQVQKQRSAGSFKRNSIKKIV.

The residue at position 2 (alanine 2) is an N-acetylalanine. Residues serine 866 and serine 878 each carry the phosphoserine modification. The 232-residue stretch at 1253–1484 (HLLYQLLWNM…DLARRFFLDI (232 aa)) folds into the Ras-GAP domain. The 159-residue stretch at 1582-1740 (EKEEFKALKT…ATLALEEDLK (159 aa)) folds into the CRAL-TRIO domain. The lipid binding stretch occupies residues 1582 to 1839 (EKEEFKALKT…RTRWELSQPD (258 aa)). Residues serine 2190 and serine 2469 each carry the phosphoserine modification. Threonine 2516 bears the Phosphothreonine mark. 4 positions are modified to phosphoserine: serine 2517, serine 2523, serine 2525, and serine 2545. The Bipartite nuclear localization signal motif lies at 2557–2573 (KRQEMESGITTPPKMRR). Residue threonine 2567 is modified to Phosphothreonine. A phosphoserine mark is found at serine 2599, serine 2804, and serine 2819. Residues 2786 to 2841 (SLATSQHSPGLDKENVELSPTAGHCNSGRTRHGSASQVQKQRSAGSFKRNSIKKIV) are disordered. The segment covering 2818–2829 (GSASQVQKQRSA) has biased composition (polar residues).

As to quaternary structure, interacts with HTR6. Interacts with SPRED2. Post-translationally, ubiquitinated by RNF7/RBX2, leading to its degradation. As to expression, expressed predominantly in brain, spinal cord and testis. In terms of tissue distribution, expressed predominantly in adrenal gland, kidney, ovary and lung. Widely and more weakly expressed. Predominantly expressed in adrenal gland. As to expression, widely and more weakly expressed. Expressed mainly in testis.

It is found in the nucleus. Its subcellular location is the nucleolus. It localises to the cell membrane. In terms of biological role, stimulates the GTPase activity of Ras. NF1 shows greater affinity for Ras GAP, but lower specific activity. May be a regulator of Ras activity. This is Neurofibromin (Nf1) from Mus musculus (Mouse).